Here is a 152-residue protein sequence, read N- to C-terminus: uncharacterized protein (152 aa).

Residues 7 to 27 form a helical membrane-spanning segment; that stretch reads TLSVIVFLISLIIIFGIYFSS.

It is found in the membrane. This is an uncharacterized protein from Methanocaldococcus jannaschii (strain ATCC 43067 / DSM 2661 / JAL-1 / JCM 10045 / NBRC 100440) (Methanococcus jannaschii).